The chain runs to 336 residues: N6-methyladenosine RNA methyltransferase MTA1 (336 aa).

Residues leucine 61–leucine 83 form a disordered region.

The protein belongs to the MT-A70-like family.

It carries out the reaction an adenosine in mRNA + S-adenosyl-L-methionine = an N(6)-methyladenosine in mRNA + S-adenosyl-L-homocysteine + H(+). In terms of biological role, N6-methyladenosine RNA methyltransferase that plays a crucial role in fungal phenotypic traits, virulence, and stress tolerance. Mediates the methylation of mRNAs to produce N6-methyladenosine (m6A)-containing mRNAs. M6A is a modification present at internal sites of mRNAs and some non-coding RNAs and plays a role in mRNA stability and processing. Mediates specifically acid phosphatase APHA mRNA stability through a YTHDF1-dependent m6A modification of the A1306, A1341, and A1666 key methylation modification sites. Also mediates the stability of the transcription factor ZAP1 mRNA via modification of residue A1935 localized in the 3'UTR. The sequence is that of N6-methyladenosine RNA methyltransferase MTA1 from Cryphonectria parasitica (strain ATCC 38755 / EP155).